A 70-amino-acid chain; its full sequence is Melittin (70 aa).

The signal sequence occupies residues 1-21 (MKFLVNVALVFMVVYISYIYA). Residues 22-43 (APEPEPAPEPEAEADAEADPEA) constitute a propeptide, removed by a dipeptidylpeptidase. Gly-44 is subject to N-formylglycine; partial. Gln-69 bears the Glutamine amide mark.

It belongs to the melittin family. In terms of assembly, monomer (in solution and for integration into membranes), homotetramer (in solution and potentially as a toroidal pore in membranes), and potenially homomultimer (as a toroidal pore in membranes). In terms of tissue distribution, expressed by the venom gland.

The protein resides in the secreted. The protein localises to the target cell membrane. Its function is as follows. Melittin: Main toxin of bee venom with strong antimicrobial activity and hemolytic activity. It has enhancing effects on bee venom phospholipase A2 activity. This amphipathic toxin binds to negatively charged membrane surface and forms pore by inserting into lipid bilayers inducing the leakage of ions and molecules and the enhancement of permeability that ultimately leads to cell lysis. It acts as a voltage-gated pore with higher selectivity for anions over cations. The ion conductance has been shown to be voltage-dependent. Self-association of melittin in membranes is promoted by high ionic strength, but not by the presence of negatively charged lipids. In vivo, intradermal injection into healthy human volunteers produce sharp pain sensation and an inflammatory response. It produces pain by activating primary nociceptor cells directly and indirectly due to its ability to activate plasma membrane phospholipase A2 and its pore-forming activity. In the context of inflammation and cancer tests, is highly cytotoxic to normal cells, highly induces calcium signaling and almost completely prevents cAMP production. In addition, prevents LPS-induced nitric oxid (NO) synthesis but does not affect the IP3 signaling and pro-inflammatory activation of endothelial cells. Also shows significant antiproliferative activity on the breast cancer cell line MDA-MB-231. In terms of biological role, melittin-S: 1.4-fold less hemolytic and adopts a less organized secondary structure than melittin. Functionally, melittin-2: Has strong hemolytic activity. The protein is Melittin (MELT) of Apis mellifera (Honeybee).